The primary structure comprises 448 residues: Phosphoglucosamine mutase (448 aa).

The active-site Phosphoserine intermediate is the Ser100. The Mg(2+) site is built by Ser100, Asp240, Asp242, and Asp244. Ser100 is subject to Phosphoserine.

Belongs to the phosphohexose mutase family. Mg(2+) is required as a cofactor. Post-translationally, activated by phosphorylation.

It carries out the reaction alpha-D-glucosamine 1-phosphate = D-glucosamine 6-phosphate. Functionally, catalyzes the conversion of glucosamine-6-phosphate to glucosamine-1-phosphate. The protein is Phosphoglucosamine mutase of Bacillus cereus (strain G9842).